Here is a 313-residue protein sequence, read N- to C-terminus: Adhesin MafA 1/2 (313 aa).

Residues 1–14 (MKTLLLLIPLVLTA) form the signal peptide. C15 carries N-palmitoyl cysteine lipidation. Residue C15 is the site of S-diacylglycerol cysteine attachment. The span at 282–298 (GDTTAQNRPDFKQNNGK) shows a compositional bias: polar residues. Positions 282 to 313 (GDTTAQNRPDFKQNNGKNPDVGNEVIRRRKGG) are disordered.

Belongs to the MafA family.

It localises to the cell outer membrane. In Neisseria meningitidis serogroup C (strain 053442), this protein is Adhesin MafA 1/2 (mafA1).